The chain runs to 149 residues: Sperm surface protein Sp17 (149 aa).

Basic and acidic residues predominate over residues 83–96 (CEQELAKSSGREET). Residues 83–114 (CEQELAKSSGREETPVTPFEESTEEEREQEEA) form a disordered region. The span at 103 to 113 (ESTEEEREQEE) shows a compositional bias: acidic residues. The 30-residue stretch at 112–141 (EEAAALKIQSLFRGHVAREEVKKMKSDKNE) folds into the IQ domain.

In terms of assembly, homodimer. May interact with ROPN1. As to expression, testis- and sperm-specific.

Its subcellular location is the membrane. Functionally, sperm surface zona pellucida binding protein. Helps to bind spermatozoa to the zona pellucida with high affinity. Might function in binding zona pellucida and carbohydrates. In Mus musculus (Mouse), this protein is Sperm surface protein Sp17 (Spa17).